A 2055-amino-acid polypeptide reads, in one-letter code: Multiple PDZ domain protein (2055 aa).

Residues 1–63 (MLETIDKNRA…SLQQLKDQVN (63 aa)) form the L27 domain. Positions 138–225 (IFELLKPPCG…TVQLVIARGS (88 aa)) constitute a PDZ 1 domain. Ser-231 carries the phosphoserine modification. The PDZ 2 domain maps to 258 to 338 (TIELVNDGSG…RVKLMIARGA (81 aa)). Residues 348-360 (LGITLSSSTSSTS) are compositionally biased toward low complexity. The interval 348–372 (LGITLSSSTSSTSEMRVDASTQKND) is disordered. PDZ domains follow at residues 378–464 (DVEL…MRKG), 546–627 (VAHV…CRRT), and 693–779 (SIEL…VAKP). Phosphoserine is present on residues Ser-783 and Ser-1066. Residues 996–1077 (TVTIAKGSSS…IGPDIKITYV (82 aa)) enclose the PDZ 6 domain. The interval 1111–1130 (PELPEREEGEGEESELQNAA) is disordered. One can recognise a PDZ 7 domain in the interval 1139–1231 (RVELWREPSK…PVVFMVQSII (93 aa)). Residue Arg-1158 is modified to Omega-N-methylarginine. Over residues 1264-1274 (LTTDQAPSQSE) the composition is skewed to polar residues. The interval 1264–1299 (LTTDQAPSQSESETEKPALCNVPPSSPSVFSEMGSD) is disordered. The region spanning 1338–1421 (VIELEKGQSG…KVKIIFIRNA (84 aa)) is the PDZ 8 domain. Residues 1435-1445 (ADSPSSTSDSP) show a composition bias toward low complexity. The segment at 1435 to 1459 (ADSPSSTSDSPQNKEVEPCSTTSAS) is disordered. A PDZ 9 domain is found at 1471-1552 (QLELPKDQGG…TVKLTVRAEN (82 aa)). The tract at residues 1557 to 1597 (AVPSSAVTVSGERKDNSQTPAVPAPDLEPIPSTSRSSTPAV) is disordered. PDZ domains lie at 1614 to 1697 (TIEI…YRDE) and 1710 to 1792 (TIEL…GRVK). A disordered region spans residues 1795-1834 (PFHSERRPSQSSQVSESSLSSFTPPLSGINTSESLESNSK). Residues Ser-1803 and Ser-1809 each carry the phosphoserine modification. Low complexity predominate over residues 1803 to 1815 (SQSSQVSESSLSS). The segment covering 1816-1834 (FTPPLSGINTSESLESNSK) has biased composition (polar residues). PDZ domains are found at residues 1847 to 1933 (TVEI…VAGG) and 1972 to 2055 (TITL…MVLS).

As to quaternary structure, interacts with CLDN5, DLG4, GRIN1, SYNGAP1, CAMK2A and CAMK2B, HTR2A, HTR2B, HTR2C, PLEKHA1/TAPP1 and PLEKHA2/TAPP2. Interacts with F11R/JAM, CLDN1, NG2, CXADR, CRB1, MPP4 and PALS1. Interacts with FAT4 (via cytoplasmic domain). Interacts with DLL1. In terms of tissue distribution, in the brain, it is strongly expressed in the choroid plexus. Within the hippocampal formation, strongest expression was seen in the soma of CA1-4 pyramidal cells. Expressed in most neocortical regions with the strongest expression in piriform cortex and amygdaloid nuclei but also detected in the subiculum and olfactory bulb. In the cerebellum, the highest level of expression was found in Purkinje cells. Moderately expressed in the granular layer and molecular layer. Expressed in the pontine nuclei, parts of spinal trigeminal nuclei, and the principal sensory trigeminal nuclei of the metencephalon. Expressed in all thalamic and hypothalamic nuclei, and the substantia nigra (at protein level). Ubiquitously expressed.

It is found in the cell membrane. Its subcellular location is the apical cell membrane. The protein resides in the postsynaptic density. The protein localises to the cell projection. It localises to the dendrite. It is found in the cell junction. Its subcellular location is the tight junction. The protein resides in the synapse. The protein localises to the synaptosome. Its function is as follows. Member of the NMDAR signaling complex that may play a role in control of AMPAR potentiation and synaptic plasticity in excitatory synapses. Promotes clustering of HT2RC at the cell surface. The chain is Multiple PDZ domain protein (Mpdz) from Mus musculus (Mouse).